Consider the following 271-residue polypeptide: Formamidopyrimidine-DNA glycosylase (271 aa).

Proline 2 serves as the catalytic Schiff-base intermediate with DNA. Catalysis depends on glutamate 3, which acts as the Proton donor. Lysine 58 serves as the catalytic Proton donor; for beta-elimination activity. 2 residues coordinate DNA: arginine 110 and arginine 152. The FPG-type zinc finger occupies 237–271 (AVYGQTGKPCTVCGTPIARIRLGNRSTWFCPVCQK). Residue arginine 261 is the Proton donor; for delta-elimination activity of the active site.

Belongs to the FPG family. In terms of assembly, monomer. Requires Zn(2+) as cofactor.

It catalyses the reaction Hydrolysis of DNA containing ring-opened 7-methylguanine residues, releasing 2,6-diamino-4-hydroxy-5-(N-methyl)formamidopyrimidine.. It carries out the reaction 2'-deoxyribonucleotide-(2'-deoxyribose 5'-phosphate)-2'-deoxyribonucleotide-DNA = a 3'-end 2'-deoxyribonucleotide-(2,3-dehydro-2,3-deoxyribose 5'-phosphate)-DNA + a 5'-end 5'-phospho-2'-deoxyribonucleoside-DNA + H(+). Its function is as follows. Involved in base excision repair of DNA damaged by oxidation or by mutagenic agents. Acts as a DNA glycosylase that recognizes and removes damaged bases. Has a preference for oxidized purines, such as 7,8-dihydro-8-oxoguanine (8-oxoG). Has AP (apurinic/apyrimidinic) lyase activity and introduces nicks in the DNA strand. Cleaves the DNA backbone by beta-delta elimination to generate a single-strand break at the site of the removed base with both 3'- and 5'-phosphates. The chain is Formamidopyrimidine-DNA glycosylase from Geobacter sulfurreducens (strain ATCC 51573 / DSM 12127 / PCA).